The sequence spans 70 residues: Large ribosomal subunit protein uL29 (70 aa).

The protein belongs to the universal ribosomal protein uL29 family.

In Methanocaldococcus jannaschii (strain ATCC 43067 / DSM 2661 / JAL-1 / JCM 10045 / NBRC 100440) (Methanococcus jannaschii), this protein is Large ribosomal subunit protein uL29 (rpl29).